An 856-amino-acid polypeptide reads, in one-letter code: DNA mismatch repair protein MutS (856 aa).

617 to 624 (GPNMGGKS) is an ATP binding site.

This sequence belongs to the DNA mismatch repair MutS family.

In terms of biological role, this protein is involved in the repair of mismatches in DNA. It is possible that it carries out the mismatch recognition step. This protein has a weak ATPase activity. In Psychromonas ingrahamii (strain DSM 17664 / CCUG 51855 / 37), this protein is DNA mismatch repair protein MutS.